A 254-amino-acid chain; its full sequence is Alcohol dehydrogenase (254 aa).

NAD(+) is bound at residue 10–33 (FVAGLGGIGLDTNREIVKSGPKNL). Ser138 provides a ligand contact to substrate. Tyr151 acts as the Proton acceptor in catalysis.

It belongs to the short-chain dehydrogenases/reductases (SDR) family. In terms of assembly, homodimer.

The catalysed reaction is a primary alcohol + NAD(+) = an aldehyde + NADH + H(+). It catalyses the reaction a secondary alcohol + NAD(+) = a ketone + NADH + H(+). This is Alcohol dehydrogenase (Adh) from Scaptomyza albovittata (Fruit fly).